The sequence spans 299 residues: Inosose dehydratase (299 aa).

It belongs to the IolE/MocC family. It depends on glutathione as a cofactor. The cofactor is Co(2+). Requires Mn(2+) as cofactor.

It catalyses the reaction scyllo-inosose = 3D-3,5/4-trihydroxycyclohexane-1,2-dione + H2O. In terms of biological role, catalyzes the dehydration of inosose (2-keto-myo-inositol, 2KMI or 2,4,6/3,5-pentahydroxycyclohexanone) to 3D-(3,5/4)-trihydroxycyclohexane-1,2-dione (D-2,3-diketo-4-deoxy-epi-inositol). The sequence is that of Inosose dehydratase from Klebsiella pneumoniae (strain 342).